Consider the following 182-residue polypeptide: ATP-dependent protease subunit HslV (182 aa).

Threonine 10 is an active-site residue. Positions 166, 169, and 172 each coordinate Na(+).

It belongs to the peptidase T1B family. HslV subfamily. As to quaternary structure, a double ring-shaped homohexamer of HslV is capped on each side by a ring-shaped HslU homohexamer. The assembly of the HslU/HslV complex is dependent on binding of ATP.

It localises to the cytoplasm. The catalysed reaction is ATP-dependent cleavage of peptide bonds with broad specificity.. Allosterically activated by HslU binding. Protease subunit of a proteasome-like degradation complex believed to be a general protein degrading machinery. The chain is ATP-dependent protease subunit HslV from Rickettsia africae (strain ESF-5).